Here is a 516-residue protein sequence, read N- to C-terminus: L-amino-acid oxidase (516 aa).

Residues 1-18 (MNVFFMFSLLFLAALGSC) form the signal peptide. Cys-28 and Cys-189 are disulfide-bonded. FAD contacts are provided by residues 61 to 62 (MA), 81 to 82 (EA), Arg-89, and 103 to 106 (GPMR). Positions 106 and 239 each coordinate substrate. Val-279 contributes to the FAD binding site. Cys-349 and Cys-430 are joined by a disulfide. An N-linked (GlcNAc...) asparagine glycan is attached at Asn-379. Tyr-390 lines the substrate pocket. FAD contacts are provided by residues Glu-475 and 482–487 (GWIDST). 482–483 (GW) is a binding site for substrate.

This sequence belongs to the flavin monoamine oxidase family. FIG1 subfamily. In terms of assembly, homodimer; non-covalently linked. It depends on FAD as a cofactor. In terms of processing, N-glycosylated. Expressed by the venom gland.

It localises to the secreted. It carries out the reaction an L-alpha-amino acid + O2 + H2O = a 2-oxocarboxylate + H2O2 + NH4(+). The catalysed reaction is L-leucine + O2 + H2O = 4-methyl-2-oxopentanoate + H2O2 + NH4(+). The enzyme catalyses L-phenylalanine + O2 + H2O = 3-phenylpyruvate + H2O2 + NH4(+). It catalyses the reaction L-methionine + O2 + H2O = 4-methylsulfanyl-2-oxobutanoate + H2O2 + NH4(+). It carries out the reaction L-arginine + O2 + H2O = 5-guanidino-2-oxopentanoate + H2O2 + NH4(+). Functionally, catalyzes an oxidative deamination of predominantly hydrophobic and aromatic L-amino acids, thus producing hydrogen peroxide that may contribute to the diverse toxic effects of this enzyme. Is active on L-Arg, L-Phe, L-Met, and L-Leu and is weakly active on L-Val. Exhibits diverse biological activities, such as hemorrhage, hemolysis, edema, apoptosis of vascular endothelial cells or tumor cell lines, antibacterial and antiparasitic activities, as well as regulation of platelet aggregation. Its effect on platelets is controversial, since it either induces aggregation or inhibits agonist-induced aggregation. These different effects are probably due to different experimental conditions. The chain is L-amino-acid oxidase from Crotalus adamanteus (Eastern diamondback rattlesnake).